A 373-amino-acid chain; its full sequence is Glutamate 5-kinase (373 aa).

K16 lines the ATP pocket. Residues S56, D143, and N155 each coordinate substrate. 175 to 176 (TD) is a binding site for ATP. The PUA domain maps to 281–359 (RGRLTLDDGA…SRIDSLLGYK (79 aa)).

It belongs to the glutamate 5-kinase family.

It localises to the cytoplasm. It carries out the reaction L-glutamate + ATP = L-glutamyl 5-phosphate + ADP. It functions in the pathway amino-acid biosynthesis; L-proline biosynthesis; L-glutamate 5-semialdehyde from L-glutamate: step 1/2. Catalyzes the transfer of a phosphate group to glutamate to form L-glutamate 5-phosphate. The sequence is that of Glutamate 5-kinase from Saccharophagus degradans (strain 2-40 / ATCC 43961 / DSM 17024).